A 20-amino-acid chain; its full sequence is Dihydrolipoamide-residue succinyltransferase component of 2-oxoglutarate dehydrogenase complex (20 aa).

Belongs to the 2-oxoacid dehydrogenase family. Forms a 24-polypeptide structural core with octahedral symmetry. Requires (R)-lipoate as cofactor.

Its subcellular location is the mitochondrion membrane. The enzyme catalyses N(6)-[(R)-dihydrolipoyl]-L-lysyl-[protein] + succinyl-CoA = N(6)-[(R)-S(8)-succinyldihydrolipoyl]-L-lysyl-[protein] + CoA. Its pathway is amino-acid degradation; L-lysine degradation via saccharopine pathway; glutaryl-CoA from L-lysine: step 6/6. Its function is as follows. The 2-oxoglutarate dehydrogenase complex catalyzes the overall conversion of 2-oxoglutarate to succinyl-CoA and CO(2). It contains multiple copies of three enzymatic components: 2-oxoglutarate dehydrogenase (E1), dihydrolipoamide succinyltransferase (E2) and lipoamide dehydrogenase (E3). In Solanum tuberosum (Potato), this protein is Dihydrolipoamide-residue succinyltransferase component of 2-oxoglutarate dehydrogenase complex.